The primary structure comprises 477 residues: Glutamyl-tRNA reductase (477 aa).

Substrate-binding positions include 49–52 (TCNR), S109, 114–116 (EGQ), and Q120. Residue C50 is the Nucleophile of the active site. 221 to 226 (GAGSMS) contributes to the NADP(+) binding site.

This sequence belongs to the glutamyl-tRNA reductase family. In terms of assembly, homodimer.

It carries out the reaction (S)-4-amino-5-oxopentanoate + tRNA(Glu) + NADP(+) = L-glutamyl-tRNA(Glu) + NADPH + H(+). Its pathway is porphyrin-containing compound metabolism; protoporphyrin-IX biosynthesis; 5-aminolevulinate from L-glutamyl-tRNA(Glu): step 1/2. In terms of biological role, catalyzes the NADPH-dependent reduction of glutamyl-tRNA(Glu) to glutamate 1-semialdehyde (GSA). The chain is Glutamyl-tRNA reductase from Thermobifida fusca (strain YX).